Consider the following 216-residue polypeptide: PEP-dependent dihydroxyacetone kinase 2, ADP-binding subunit DhaL (216 aa).

In terms of domain architecture, DhaL spans 9–210; sequence AFFGHVLQDM…SWMLMNVILE (202 aa). Mg(2+) contacts are provided by aspartate 33, aspartate 38, and aspartate 40. ADP is bound by residues 41–44, 84–85, glycine 126, methionine 135, arginine 182, and 195–197; these read HGIN, AS, and DPG.

As to quaternary structure, homodimer. The dihydroxyacetone kinase complex is composed of a homodimer of DhaM, a homodimer of DhaK and the subunit DhaL. Mg(2+) serves as cofactor.

The protein resides in the cytoplasm. It carries out the reaction dihydroxyacetone + phosphoenolpyruvate = dihydroxyacetone phosphate + pyruvate. Its pathway is polyol metabolism; glycerol degradation. Its function is as follows. ADP-binding subunit of the dihydroxyacetone kinase, which is responsible for the phosphoenolpyruvate (PEP)-dependent phosphorylation of dihydroxyacetone. DhaL-ADP is converted to DhaL-ATP via a phosphoryl group transfer from DhaM and transmits it to dihydroxyacetone binds to DhaK. The sequence is that of PEP-dependent dihydroxyacetone kinase 2, ADP-binding subunit DhaL from Listeria innocua serovar 6a (strain ATCC BAA-680 / CLIP 11262).